Consider the following 324-residue polypeptide: uncharacterized protein (324 aa).

Residues 1-11 (MNTNINVNGSN) are compositionally biased toward polar residues. Disordered regions lie at residues 1-77 (MNTN…YSYS), 132-194 (NNHY…NNNN), and 272-324 (DENI…DNDS). Residues 21–64 (NENNNNNNGRNNNTNNNNNGRYNNNNNNNNNNNNNNYNLNMNST) are compositionally biased toward low complexity. The segment covering 279–324 (SNNNNNNNNNNNNSYNVNICRNNSNFNVNENNGGDNNNDNNNDNDS) has biased composition (low complexity).

This is an uncharacterized protein from Dictyostelium discoideum (Social amoeba).